The chain runs to 618 residues: Sulfite reductase [NADPH] flavoprotein alpha-component (618 aa).

A Flavodoxin-like domain is found at 64–202 (VTLISASQTG…QAQQWRQQVV (139 aa)). Residues 70–75 (SQTGNA), 117–120 (STQG), and 153–162 (LGDTSYEHFC) contribute to the FMN site. An FAD-binding FR-type domain is found at 253–467 (TAPLTAQLSV…IEHNDNFRLP (215 aa)). FAD is bound by residues Thr-341, Lys-375, 405-408 (RLYS), 423-425 (TVG), Tyr-429, and 438-441 (GGAS). NADP(+) is bound by residues 538 to 539 (SR), 544 to 548 (KIYVQ), and Asp-580. Tyr-618 lines the FAD pocket.

It belongs to the NADPH-dependent sulphite reductase flavoprotein subunit CysJ family. In the N-terminal section; belongs to the flavodoxin family. The protein in the C-terminal section; belongs to the flavoprotein pyridine nucleotide cytochrome reductase family. As to quaternary structure, alpha(8)-beta(8). The alpha component is a flavoprotein, the beta component is a hemoprotein. It depends on FAD as a cofactor. The cofactor is FMN.

The enzyme catalyses hydrogen sulfide + 3 NADP(+) + 3 H2O = sulfite + 3 NADPH + 4 H(+). It functions in the pathway sulfur metabolism; hydrogen sulfide biosynthesis; hydrogen sulfide from sulfite (NADPH route): step 1/1. In terms of biological role, component of the sulfite reductase complex that catalyzes the 6-electron reduction of sulfite to sulfide. This is one of several activities required for the biosynthesis of L-cysteine from sulfate. The flavoprotein component catalyzes the electron flow from NADPH -&gt; FAD -&gt; FMN to the hemoprotein component. The protein is Sulfite reductase [NADPH] flavoprotein alpha-component of Yersinia pseudotuberculosis serotype I (strain IP32953).